The chain runs to 189 residues: Peroxiredoxin sll1621 (189 aa).

One can recognise a Thioredoxin domain in the interval 2–177 (TPERVPSVVF…MLAYLKGAEA (176 aa)). The active-site Cysteine sulfenic acid (-SOH) intermediate (for peroxiredoxin activity) is the cysteine 55.

The protein belongs to the peroxiredoxin family. Prx5 subfamily. In terms of assembly, monomer.

The catalysed reaction is a hydroperoxide + 2 glutathione = an alcohol + glutathione disulfide + H2O. Thiol-specific peroxidase that catalyzes the reduction of hydrogen peroxide and organic hydroperoxides to water and alcohols, respectively. Plays a role in cell protection against oxidative stress by detoxifying peroxides. This is Peroxiredoxin sll1621 from Synechocystis sp. (strain ATCC 27184 / PCC 6803 / Kazusa).